Reading from the N-terminus, the 98-residue chain is Acylphosphatase (98 aa).

The Acylphosphatase-like domain occupies 12–98 (RLSAWVHGHV…DATMTGFSER (87 aa)). Residues arginine 27 and asparagine 45 contribute to the active site.

This sequence belongs to the acylphosphatase family.

The enzyme catalyses an acyl phosphate + H2O = a carboxylate + phosphate + H(+). The polypeptide is Acylphosphatase (acyP) (Mycolicibacterium smegmatis (strain ATCC 700084 / mc(2)155) (Mycobacterium smegmatis)).